Here is a 175-residue protein sequence, read N- to C-terminus: Peptide deformylase (175 aa).

Residues Cys-96 and His-138 each contribute to the Fe cation site. Residue Glu-139 is part of the active site. His-142 is a binding site for Fe cation.

This sequence belongs to the polypeptide deformylase family. Requires Fe(2+) as cofactor.

The catalysed reaction is N-terminal N-formyl-L-methionyl-[peptide] + H2O = N-terminal L-methionyl-[peptide] + formate. Its function is as follows. Removes the formyl group from the N-terminal Met of newly synthesized proteins. Requires at least a dipeptide for an efficient rate of reaction. N-terminal L-methionine is a prerequisite for activity but the enzyme has broad specificity at other positions. In Helicobacter acinonychis (strain Sheeba), this protein is Peptide deformylase.